Here is a 129-residue protein sequence, read N- to C-terminus: Glycine cleavage system H protein (129 aa).

Positions 24–106 constitute a Lipoyl-binding domain; that stretch reads LIRVGISAFA…HGAGWLLVVR (83 aa). K65 is subject to N6-lipoyllysine.

It belongs to the GcvH family. The glycine cleavage system is composed of four proteins: P, T, L and H. It depends on (R)-lipoate as a cofactor.

The glycine cleavage system catalyzes the degradation of glycine. The H protein shuttles the methylamine group of glycine from the P protein to the T protein. The chain is Glycine cleavage system H protein from Synechococcus sp. (strain CC9902).